The primary structure comprises 153 residues: Large ribosomal subunit protein uL22 (153 aa).

It belongs to the universal ribosomal protein uL22 family. Part of the 50S ribosomal subunit.

This protein binds specifically to 23S rRNA. It makes multiple contacts with different domains of the 23S rRNA in the assembled 50S subunit and ribosome. Functionally, the globular domain of the protein is located near the polypeptide exit tunnel on the outside of the subunit, while an extended beta-hairpin is found that lines the wall of the exit tunnel in the center of the 70S ribosome. The chain is Large ribosomal subunit protein uL22 from Methanococcus maripaludis (strain C5 / ATCC BAA-1333).